The chain runs to 116 residues: Small ribosomal subunit protein uS13 (116 aa).

The interval 92–116 (RRGLPVRGQNTKNNARTRKGTKRNR) is disordered. The segment covering 106–116 (ARTRKGTKRNR) has biased composition (basic residues).

This sequence belongs to the universal ribosomal protein uS13 family. In terms of assembly, part of the 30S ribosomal subunit. Forms a loose heterodimer with protein S19. Forms two bridges to the 50S subunit in the 70S ribosome.

Functionally, located at the top of the head of the 30S subunit, it contacts several helices of the 16S rRNA. In the 70S ribosome it contacts the 23S rRNA (bridge B1a) and protein L5 of the 50S subunit (bridge B1b), connecting the 2 subunits; these bridges are implicated in subunit movement. Contacts the tRNAs in the A and P-sites. The protein is Small ribosomal subunit protein uS13 of Lactobacillus acidophilus (strain ATCC 700396 / NCK56 / N2 / NCFM).